A 224-amino-acid chain; its full sequence is Non-structural protein V (224 aa).

Residues 54–65 (QKNIQHPTASHQ) show a composition bias toward polar residues. Disordered regions lie at residues 54–94 (QKNI…TQIP) and 150–172 (TEFKRGAGSGCSRPDNPRGGHRR). His170, Cys189, Cys193, Cys205, Cys207, Cys210, Cys214, and Cys217 together coordinate Zn(2+).

It belongs to the paramyxoviruses V protein family. In terms of assembly, interacts with host IFIH1/MDA5 and DHX58/LGP2. Forms with host DDB1, CUL4A, STAT1, STAT2 and STAT3 the mumps virus V-dependent complex (VDC).

Its subcellular location is the virion. It is found in the host cytoplasm. Plays an essential role in the inhibition of host immune response. Prevents the establishment of cellular antiviral state by blocking interferon-alpha/beta (IFN-alpha/beta) production and signaling pathway. Interacts with host IFIH1/MDA5 and DHX58/LGP2 to inhibit the transduction pathway involved in the activation of IFN-beta promoter, thus protecting the virus against cell antiviral state. Blocks the type I and II interferon signaling pathways by interacting with host STAT1, STAT2 and STAT3, and mediating their ubiquitination and subsequent proteasomal degradation. This is Non-structural protein V from Homo sapiens (Human).